The primary structure comprises 282 residues: MSSYENHQALDGLTLGKSTDYRDNYDASLLQGVPRSLNRDPLGLTADNLPFHGADIWTLYELSWLNSQGLPQVAVGHVELDYTSVNLIESKSFKLYLNSFNQTRFDTWETVRQTLERDLRACAQGNVSVRLHRLDELEGQPVAHFHGTCIDDQDISIDNYQFTTDYLQHAVSGEKQVEETLVSHLLKSNCLITHQPDWGSIQIQYRGRKIDREKLLRYLVSFRHHNEFHEQCVERIFNDILRFCQPETLSVYARYTRRGGLDINPWRSNTDFVPATGRLARQ.

Substrate is bound at residue 88-90 (IES). An NADPH-binding site is contributed by 90–91 (SK). Catalysis depends on cysteine 190, which acts as the Thioimide intermediate. The Proton donor role is filled by aspartate 197. 229–230 (HE) contributes to the substrate binding site. Position 258–259 (258–259 (RG)) interacts with NADPH.

The protein belongs to the GTP cyclohydrolase I family. QueF type 2 subfamily. Homodimer.

It is found in the cytoplasm. It carries out the reaction 7-aminomethyl-7-carbaguanine + 2 NADP(+) = 7-cyano-7-deazaguanine + 2 NADPH + 3 H(+). The protein operates within tRNA modification; tRNA-queuosine biosynthesis. Catalyzes the NADPH-dependent reduction of 7-cyano-7-deazaguanine (preQ0) to 7-aminomethyl-7-deazaguanine (preQ1). The polypeptide is NADPH-dependent 7-cyano-7-deazaguanine reductase (Salmonella paratyphi C (strain RKS4594)).